Here is a 399-residue protein sequence, read N- to C-terminus: Elongation factor Tu (399 aa).

Positions 10–204 constitute a tr-type G domain; it reads KPHVNIGTIG…AVDASIPEPE (195 aa). The segment at 19–26 is G1; the sequence is GHVDHGKT. 19-26 provides a ligand contact to GTP; the sequence is GHVDHGKT. Thr-26 contacts Mg(2+). The G2 stretch occupies residues 60-64; sequence GITIN. A G3 region spans residues 81–84; sequence DCPG. GTP contacts are provided by residues 81 to 85 and 136 to 139; these read DCPGH and NKCD. Residues 136–139 are G4; sequence NKCD. Positions 174–176 are G5; it reads SGL.

It belongs to the TRAFAC class translation factor GTPase superfamily. Classic translation factor GTPase family. EF-Tu/EF-1A subfamily. In terms of assembly, monomer.

The protein localises to the cytoplasm. The catalysed reaction is GTP + H2O = GDP + phosphate + H(+). Its function is as follows. GTP hydrolase that promotes the GTP-dependent binding of aminoacyl-tRNA to the A-site of ribosomes during protein biosynthesis. The protein is Elongation factor Tu of Synechococcus sp. (strain CC9311).